The primary structure comprises 72 residues: Protein CYSTEINE-RICH TRANSMEMBRANE MODULE 9 (72 aa).

Polar residues predominate over residues 1–22 (MNPSEQNHLSVEKPSQTSSGPY). Residues 1-46 (MNPSEQNHLSVEKPSQTSSGPYTSPPPIGYPTRDAMVGDPPAAAVE) are disordered. A helical transmembrane segment spans residues 49–65 (SKGDGFWKGCCAAICCC).

Belongs to the CYSTM1 family. In terms of assembly, heterodimers. Interacts with WIH1/CYSTM13. Mostly expressed in roots and flowers and, to a lower extent, in stems, siliques and leaves.

Its subcellular location is the cell membrane. The protein resides in the nucleus. Its function is as follows. Involved in resistance to abiotic stress. The protein is Protein CYSTEINE-RICH TRANSMEMBRANE MODULE 9 of Arabidopsis thaliana (Mouse-ear cress).